We begin with the raw amino-acid sequence, 311 residues long: Malate dehydrogenase (311 aa).

NAD(+)-binding positions include 7–12 (GAGNVG) and Asp-32. Substrate is bound by residues Arg-82 and Arg-88. NAD(+) is bound by residues Asn-95 and 118 to 120 (VSN). Substrate is bound by residues Asn-120 and Arg-151. His-175 serves as the catalytic Proton acceptor.

The protein belongs to the LDH/MDH superfamily. MDH type 3 family.

It catalyses the reaction (S)-malate + NAD(+) = oxaloacetate + NADH + H(+). Its function is as follows. Catalyzes the reversible oxidation of malate to oxaloacetate. The sequence is that of Malate dehydrogenase from Flavobacterium johnsoniae (strain ATCC 17061 / DSM 2064 / JCM 8514 / BCRC 14874 / CCUG 350202 / NBRC 14942 / NCIMB 11054 / UW101) (Cytophaga johnsonae).